The chain runs to 613 residues: Serine protease FAM111A (613 aa).

The segment at methionine 1–asparagine 72 is disordered. Residue lysine 19 forms a Glycyl lysine isopeptide (Lys-Gly) (interchain with G-Cter in SUMO2) linkage. Serine 25 is subject to Phosphoserine. Lysine 29 participates in a covalent cross-link: Glycyl lysine isopeptide (Lys-Gly) (interchain with G-Cter in SUMO2). A compositionally biased stretch (basic and acidic residues) spans valine 40–arginine 56. A Glycyl lysine isopeptide (Lys-Gly) (interchain with G-Cter in SUMO2) cross-link involves residue lysine 62. Active-site charge relay system residues include histidine 383, aspartate 437, and serine 543.

This sequence belongs to the FAM111 family. In terms of assembly, interacts (via PIP-box) with PCNA; this interaction is direct. In terms of processing, autocatalytically cleaved; autocatalytic cleavage takes place in trans.

It is found in the nucleus. The protein localises to the chromosome. Its subcellular location is the cytoplasm. Its function is as follows. Single-stranded DNA-binding serine protease that mediates the proteolytic cleavage of covalent DNA-protein cross-links (DPCs) during DNA synthesis, thereby playing a key role in maintaining genomic integrity. DPCs are highly toxic DNA lesions that interfere with essential chromatin transactions, such as replication and transcription, and which are induced by reactive agents, such as UV light or formaldehyde. Protects replication fork from stalling by removing DPCs, such as covalently trapped topoisomerase 1 (TOP1) adducts on DNA lesion, or poly(ADP-ribose) polymerase 1 (PARP1)-DNA complexes trapped by PARP inhibitors. Required for PCNA loading on replication sites. Promotes S-phase entry and DNA synthesis. The sequence is that of Serine protease FAM111A from Mus musculus (Mouse).